Reading from the N-terminus, the 452-residue chain is MLTRGEEKNMSKTIHFIGIKGSGMSALALLLHQMGYKVQGSDVDKYYFTQHGLEKAGIPILPFAESNITNDMEIIAGNAFRKDNNIEVAYALENGYHFKRYHEFLGEFMNQFTSLGVAGAHGKTSTTGLLAHVLKNITDTSYLIGDGTGRGLANSQYFVFESDEYERHFMPYHPEYSIITNIDFDHPDYFTGVDDVFAAFNDYAKQVKKGLFVYGEDPYLRKLTSSAPIYYYGFKDNDDFVAYDIMRSTNGSDFKVRHGQNELGSFHVPAFGRHNVLNATAVIANLYIAGVEMDLVRQHLKTFSGVKRRFSEKLINDVTIIDDFAHHPTEIIATLDAARQKYPSKEIVAIFQPHTFTRTIALLDEFAQALNEADSVYLAQIYGSAREVDHGDVKVEDLADKIVKPAKVITVDNVSPLLDHHNAVYVFMGAGDIQLYERSFEELLSNLTKNTR.

ATP is bound at residue 119–125 (GAHGKTS).

This sequence belongs to the MurCDEF family.

It localises to the cytoplasm. It carries out the reaction UDP-N-acetyl-alpha-D-muramate + L-alanine + ATP = UDP-N-acetyl-alpha-D-muramoyl-L-alanine + ADP + phosphate + H(+). It functions in the pathway cell wall biogenesis; peptidoglycan biosynthesis. Cell wall formation. This is UDP-N-acetylmuramate--L-alanine ligase from Streptococcus mutans serotype c (strain ATCC 700610 / UA159).